Here is a 136-residue protein sequence, read N- to C-terminus: Psoriasis susceptibility 1 candidate gene 2 protein (136 aa).

The signal sequence occupies residues 1-22 (MILNWKLLGILVLCLHTRGISG). Residues 20-136 (ISGSEGHPSH…DLDPPREEYR (117 aa)) are disordered. Composition is skewed to pro residues over residues 44 to 69 (PQGPPVPGDPWPGAPPLFEDPPPTRP) and 84 to 116 (PEPPRTDPPQPPRPDDPWPAGPQPPENPWPPAP). Residues 118–136 (VDNRPQEEPDLDPPREEYR) are compositionally biased toward basic and acidic residues.

As to expression, expressed in skin. Also expressed in heart and skeletal muscle.

The protein resides in the secreted. The polypeptide is Psoriasis susceptibility 1 candidate gene 2 protein (PSORS1C2) (Homo sapiens (Human)).